Here is a 476-residue protein sequence, read N- to C-terminus: Membrane-bound lytic murein transglycosylase F (476 aa).

Residues 1–15 (MRSFLLILFCVSLLT) form the signal peptide. The non-LT domain stretch occupies residues 16-258 (GCQGERVDAA…HLNEKYFAHV (243 aa)). The LT domain stretch occupies residues 259 to 476 (KRFDYVDTRA…QSEISAAQPN (218 aa)). Glu-303 is a catalytic residue. The disordered stretch occupies residues 456–476 (EAQQQTAEKQSQSEISAAQPN).

In the N-terminal section; belongs to the bacterial solute-binding protein 3 family. It in the C-terminal section; belongs to the transglycosylase Slt family.

It is found in the cell outer membrane. It catalyses the reaction Exolytic cleavage of the (1-&gt;4)-beta-glycosidic linkage between N-acetylmuramic acid (MurNAc) and N-acetylglucosamine (GlcNAc) residues in peptidoglycan, from either the reducing or the non-reducing ends of the peptidoglycan chains, with concomitant formation of a 1,6-anhydrobond in the MurNAc residue.. In terms of biological role, murein-degrading enzyme that degrades murein glycan strands and insoluble, high-molecular weight murein sacculi, with the concomitant formation of a 1,6-anhydromuramoyl product. Lytic transglycosylases (LTs) play an integral role in the metabolism of the peptidoglycan (PG) sacculus. Their lytic action creates space within the PG sacculus to allow for its expansion as well as for the insertion of various structures such as secretion systems and flagella. The sequence is that of Membrane-bound lytic murein transglycosylase F from Shewanella loihica (strain ATCC BAA-1088 / PV-4).